The chain runs to 375 residues: Anhydro-N-acetylmuramic acid kinase (375 aa).

Residue 12 to 19 (GTSMDGVD) coordinates ATP.

Belongs to the anhydro-N-acetylmuramic acid kinase family.

The catalysed reaction is 1,6-anhydro-N-acetyl-beta-muramate + ATP + H2O = N-acetyl-D-muramate 6-phosphate + ADP + H(+). It functions in the pathway amino-sugar metabolism; 1,6-anhydro-N-acetylmuramate degradation. The protein operates within cell wall biogenesis; peptidoglycan recycling. In terms of biological role, catalyzes the specific phosphorylation of 1,6-anhydro-N-acetylmuramic acid (anhMurNAc) with the simultaneous cleavage of the 1,6-anhydro ring, generating MurNAc-6-P. Is required for the utilization of anhMurNAc either imported from the medium or derived from its own cell wall murein, and thus plays a role in cell wall recycling. The protein is Anhydro-N-acetylmuramic acid kinase of Photobacterium profundum (strain SS9).